Consider the following 544-residue polypeptide: Cytochrome P450 monooxygenase notG' (544 aa).

Positions 1–22 (MELPFSAMSLLYLLVGIAGVIS) are cleaved as a signal peptide. The next 2 helical transmembrane spans lie at 42–62 (WYTL…GLPL) and 66–86 (AKAT…SLLL). N-linked (GlcNAc...) asparagine glycosylation is found at N226 and N404. Residue C487 coordinates heme.

The protein belongs to the cytochrome P450 family. It depends on heme as a cofactor.

Its subcellular location is the membrane. It participates in alkaloid biosynthesis. In terms of biological role, cytochrome P450 monooxygenase; part of the gene cluster that mediates the biosynthesis of notoamide, a fungal indole alkaloid that belongs to a family of natural products containing a characteristic bicyclo[2.2.2]diazaoctane core. The first step of notoamide biosynthesis involves coupling of L-proline and L-tryptophan by the bimodular NRPS notE', to produce cyclo-L-tryptophan-L-proline called brevianamide F. The reverse prenyltransferase notF' then acts as a deoxybrevianamide E synthase and converts brevianamide F to deoxybrevianamide E via reverse prenylation at C-2 of the indole ring leading to the bicyclo[2.2.2]diazaoctane core. Deoxybrevianamide E is further hydroxylated at C-6 of the indole ring, likely catalyzed by the cytochrome P450 monooxygenase notG', to yield 6-hydroxy-deoxybrevianamide E. 6-hydroxy-deoxybrevianamide E is a specific substrate of the prenyltransferase notC' for normal prenylation at C-7 to produce 6-hydroxy-7-prenyl-deoxybrevianamide, also called notoamide S. As the proposed pivotal branching point in notoamide biosynthesis, notoamide S can be diverted to notoamide E through an oxidative pyran ring closure putatively catalyzed by either notH' cytochrome P450 monooxygenase or the notD' FAD-linked oxidoreductase. This step would be followed by an indole 2,3-epoxidation-initiated pinacol-like rearrangement catalyzed by the notB' FAD-dependent monooxygenase leading to the formation of notoamide C and notoamide D. On the other hand notoamide S is converted to notoamide T by notH' (or notD'), a bifunctional oxidase that also functions as the intramolecular Diels-Alderase responsible for generation of (-)-notoamide T. To generate antipodal (+)-notoaminide T, notH (or notD) in Aspergillus strain MF297-2 is expected to catalyze a Diels-Alder reaction leading to the opposite stereochemistry. The remaining oxidoreductase notD' (or notH') likely catalyzes the oxidative pyran ring formation to yield (-)-stephacidin A. The FAD-dependent monooxygenase notI' is highly similar to notB' and is predicted to catalyze a similar conversion from (-)-stephacidin A to (+)-notoamide B via the 2,3-epoxidation of (-)-stephacidin A followed by a pinacol-type rearrangement. Finally, it remains unclear which enzyme could be responsible for the final hydroxylation steps leading to notoamide A and sclerotiamide. The chain is Cytochrome P450 monooxygenase notG' from Aspergillus versicolor.